The chain runs to 456 residues: GTPase Der (456 aa).

EngA-type G domains follow at residues 2–167 and 176–351; these read LKVA…DQFG and ATFC…AQLK. GTP is bound by residues 8–15, 55–59, 118–121, 182–189, 229–233, and 294–297; these read GKPNVGKS, DTGGL, NKIE, DTAGI, and NKWD. Residues 352–436 form the KH-like domain; that stretch reads IKISTSLLND…PITLYFKSKN (85 aa).

This sequence belongs to the TRAFAC class TrmE-Era-EngA-EngB-Septin-like GTPase superfamily. EngA (Der) GTPase family. In terms of assembly, associates with the 50S ribosomal subunit.

GTPase that plays an essential role in the late steps of ribosome biogenesis. This chain is GTPase Der, found in Mycoplasmoides gallisepticum (strain R(low / passage 15 / clone 2)) (Mycoplasma gallisepticum).